The following is a 1146-amino-acid chain: Probable phospholipid-transporting ATPase IIB (1146 aa).

Topologically, residues 1–143 (MADQIPLYPV…IKNQKYNVFT (143 aa)) are cytoplasmic. A helical transmembrane segment spans residues 144-164 (FIPGVLYEQFKFFLNLYFLVV). Over 165-172 (SCSQFVPA) the chain is Extracellular. A helical membrane pass occupies residues 173–193 (LKIGYLYTYWAPLGFVLAVTI). Topologically, residues 194–381 (AREAIDEFRR…LDLELNQLTK (188 aa)) are cytoplasmic. Residues 382 to 402 (ALFLALVVLSVVMVTLQGFAG) form a helical membrane-spanning segment. Over 403 to 407 (PWYRN) the chain is Extracellular. Residues 408–427 (LFRFLLLFSYIIPISLRVNL) traverse the membrane as a helical segment. The Cytoplasmic portion of the chain corresponds to 428–938 (DMGKAAYGWM…ALGQFVMHRG (511 aa)). The active-site 4-aspartylphosphate intermediate is the Asp467. ATP contacts are provided by Asp467, Lys468, and Thr469. Mg(2+) is bound at residue Asp467. Mg(2+) is bound at residue Thr469. Residues 508-519 (VHSQPSGHNPSS) show a composition bias toward polar residues. Positions 508–535 (VHSQPSGHNPSSAPLRRSQSSTPKVKKS) are disordered. Positions 590, 632, 637, 656, 685, 686, 765, 766, 767, 847, and 853 each coordinate ATP. Asp873 is a binding site for Mg(2+). Residues Asn876 and Asp877 each contribute to the ATP site. Asp877 is a Mg(2+) binding site. The helical transmembrane segment at 939–959 (LIISTMQAVFSSVFYFASVPL) threads the bilayer. Residues 960–961 (YQ) lie on the Extracellular side of the membrane. A helical transmembrane segment spans residues 962–982 (GFLMVGYATIYTMFPVFSLVL). The Cytoplasmic portion of the chain corresponds to 983 to 1011 (DQDVKPEMAILYPELYKDLTKGRSLSFKT). A helical membrane pass occupies residues 1012–1032 (FLIWVLISIYQGGILMYGALL). Topologically, residues 1033 to 1040 (LFEDEFVH) are extracellular. A helical transmembrane segment spans residues 1041 to 1061 (VVAISFTALILTELLMVALTI). Residues 1062–1065 (RTWH) are Cytoplasmic-facing. Residues 1066 to 1086 (WLMVVAEFLSLGCYVASLAFL) form a helical membrane-spanning segment. At 1087–1105 (NEYFGIGRVSFGAFLDVAF) the chain is on the extracellular side. Residues 1106 to 1128 (ITTVTFLWKVSAITVVSCLPLYV) form a helical membrane-spanning segment. Residues 1129–1146 (LKYLKRKLSPPSYSKLSS) lie on the Cytoplasmic side of the membrane.

The protein belongs to the cation transport ATPase (P-type) (TC 3.A.3) family. Type IV subfamily. Requires Mg(2+) as cofactor. As to expression, found in most tissues except spleen and muscle. Most abundant in testis. Also detected in fetal tissues.

It is found in the golgi apparatus. The protein localises to the trans-Golgi network membrane. It catalyses the reaction ATP + H2O + phospholipidSide 1 = ADP + phosphate + phospholipidSide 2.. This is Probable phospholipid-transporting ATPase IIB (Atp9b) from Mus musculus (Mouse).